A 375-amino-acid chain; its full sequence is MIFNPVISNHKLSHYIHVFCTFTTFCILGTETRQAITALSTYTPAFVTAPTVLWSNCSSCMLMGIMQSLNAYTWMKDHQVLFLGVTTGYCGALSSFSSMLLEMFEHSTNLTNGNIANHTKLPNRAYGIMEFLSVLLVHLMVSMGSLIFGRQLGKEVIVAYGSSSFSKPYTPPSDTVKENAGDVDTQEMEKNILEFKFKTPAPFFKKFFDVVDKLAYALAFPLIILFVVLCAYYENYSRGKWTLPCLFGIFAGFLRYWLAEMFNKTNKKFPLGTFLANVFATLLIGIFTMVQRGKKHFSTDIPIVNSLNSCHIVSALISGFCGTLSTISTFINEGYKLSFINMLIYYTVSIGISYCLLVITLGSYAWTRGLTNPIC.

Residues Met1–Lys11 are Cytoplasmic-facing. A helical membrane pass occupies residues Leu12 to Thr32. Over Arg33 to Gln34 the chain is Extracellular. A helical membrane pass occupies residues Ala35–Ser55. Over Asn56–Gln79 the chain is Cytoplasmic. The chain crosses the membrane as a helical span at residues Val80–Leu100. Residues Leu101–Gly127 are Extracellular-facing. N-linked (GlcNAc...) asparagine glycans are attached at residues Asn109 and Asn117. Residues Ile128–Phe148 form a helical membrane-spanning segment. At Gly149–Lys213 the chain is on the cytoplasmic side. A helical transmembrane segment spans residues Leu214 to Glu234. N-linked (GlcNAc...) asparagine glycosylation occurs at Asn235. At Asn235–Trp241 the chain is on the extracellular side. The helical transmembrane segment at Thr242–Phe262 threads the bilayer. The Cytoplasmic segment spans residues Asn263–Lys268. The chain crosses the membrane as a helical span at residues Phe269 to Met289. Residues Val290 to Cys310 are Extracellular-facing. Residues His311 to Ile331 form a helical membrane-spanning segment. Residues Asn332 to Ser338 are Cytoplasmic-facing. The helical transmembrane segment at Phe339 to Ile359 threads the bilayer. Residues Thr360–Cys375 are Extracellular-facing.

The protein belongs to the fluoride channel Fluc/FEX (TC 1.A.43) family.

The protein resides in the cell membrane. It catalyses the reaction fluoride(in) = fluoride(out). Fluoride channel required for the rapid expulsion of cytoplasmic fluoride. The protein is Fluoride export protein 2 of Saccharomyces cerevisiae (strain ATCC 204508 / S288c) (Baker's yeast).